A 64-amino-acid polypeptide reads, in one-letter code: MPKMKTDKGVQKRFKKTANGFKRKQAHLRHILTKKSTKRKRHLRAKCLVAKSDVPAIARQLPYA.

This sequence belongs to the bacterial ribosomal protein bL35 family.

The sequence is that of Large ribosomal subunit protein bL35 from Shewanella loihica (strain ATCC BAA-1088 / PV-4).